The sequence spans 116 residues: MAKRGGFPGGMPGNMNNLMKQAQRMQRQMEEQQAELENKEFSATAGGGVVEVTVTGKREVSKVKIDPEAVDPDDVEMLEDLIVAATNEALRKCEEESQAQMAKITGGLGGLGGGLF.

The segment covering 1-12 (MAKRGGFPGGMP) has biased composition (gly residues). Positions 1–42 (MAKRGGFPGGMPGNMNNLMKQAQRMQRQMEEQQAELENKEFS) are disordered. Residues 13 to 26 (GNMNNLMKQAQRMQ) are compositionally biased toward low complexity.

Belongs to the YbaB/EbfC family. Homodimer.

Its subcellular location is the cytoplasm. The protein resides in the nucleoid. In terms of biological role, binds to DNA and alters its conformation. May be involved in regulation of gene expression, nucleoid organization and DNA protection. The protein is Nucleoid-associated protein EUBELI_02017 of Lachnospira eligens (strain ATCC 27750 / DSM 3376 / VPI C15-48 / C15-B4) (Eubacterium eligens).